Consider the following 1334-residue polypeptide: Stress response protein NST1 (1334 aa).

The span at 1-14 (MPSHSKNKKRKSKS) shows a compositional bias: basic residues. 5 disordered regions span residues 1–82 (MPSH…SSNN), 212–242 (QMIS…NESL), 530–565 (IISP…RNDL), 712–849 (AEES…AEQK), and 977–996 (AAIN…NSSV). Residues 15 to 25 (KGGSTVKKSGG) show a composition bias toward low complexity. Residues 538 to 555 (GNDTEEDIDYYDDEDDVS) show a composition bias toward acidic residues. Residues 694–876 (YHAKQAENNR…LEEEEKRLKS (183 aa)) are a coiled coil. Polar residues predominate over residues 981–996 (DPTTPQTTLPYGNSSV).

The protein belongs to the NST1 family.

The protein localises to the cytoplasm. Functionally, may act as a negative regulator of salt tolerance. The polypeptide is Stress response protein NST1 (NST1) (Vanderwaltozyma polyspora (strain ATCC 22028 / DSM 70294 / BCRC 21397 / CBS 2163 / NBRC 10782 / NRRL Y-8283 / UCD 57-17) (Kluyveromyces polysporus)).